The sequence spans 564 residues: Septation ring formation regulator EzrA (564 aa).

The Extracellular portion of the chain corresponds to 1-4 (MVLY). Residues 5–23 (IILAIIVIILIAVGVLFYL) form a helical membrane-spanning segment. Residues 24–564 (RSNKRQIIEK…KHIEEEVIKQ (541 aa)) are Cytoplasmic-facing. Coiled-coil stretches lie at residues 99 to 138 (SFNA…YKDN), 190 to 223 (DGNY…LIRE), 271 to 300 (LISR…LIEH), 350 to 435 (VRQF…RRLL), and 471 to 550 (VKQL…ESVE).

The protein belongs to the EzrA family.

The protein resides in the cell membrane. Its function is as follows. Negative regulator of FtsZ ring formation; modulates the frequency and position of FtsZ ring formation. Inhibits FtsZ ring formation at polar sites. Interacts either with FtsZ or with one of its binding partners to promote depolymerization. The sequence is that of Septation ring formation regulator EzrA from Staphylococcus aureus (strain NCTC 8325 / PS 47).